The following is a 594-amino-acid chain: Cytosolic Fe-S cluster assembly factor NAR1 (594 aa).

[4Fe-4S] cluster contacts are provided by cysteine 20, cysteine 88, cysteine 91, cysteine 94, cysteine 209, and cysteine 264. Residues 444–465 (RRARMSKSEDSSGASASSMAPA) form a disordered region. Residues 454 to 465 (SSGASASSMAPA) show a composition bias toward low complexity. [4Fe-4S] cluster contacts are provided by cysteine 481 and cysteine 485. Residues 492 to 511 (IAAPAPTSTPPAAPAPAHAA) are disordered.

Belongs to the NARF family.

Component of the cytosolic Fe/S protein assembly machinery. Required for maturation of extramitochondrial Fe/S proteins. May play a role in the transfer of pre-assembled Fe/S clusters to target apoproteins. The protein is Cytosolic Fe-S cluster assembly factor NAR1 (NAR1) of Lodderomyces elongisporus (strain ATCC 11503 / CBS 2605 / JCM 1781 / NBRC 1676 / NRRL YB-4239) (Yeast).